The following is a 234-amino-acid chain: UPF0173 metal-dependent hydrolase Msp_0516 (234 aa).

It belongs to the UPF0173 family.

This chain is UPF0173 metal-dependent hydrolase Msp_0516, found in Methanosphaera stadtmanae (strain ATCC 43021 / DSM 3091 / JCM 11832 / MCB-3).